Consider the following 63-residue polypeptide: Large ribosomal subunit protein bL35 (63 aa).

The protein belongs to the bacterial ribosomal protein bL35 family.

The sequence is that of Large ribosomal subunit protein bL35 from Campylobacter hominis (strain ATCC BAA-381 / DSM 21671 / CCUG 45161 / LMG 19568 / NCTC 13146 / CH001A).